The primary structure comprises 217 residues: Large ribosomal subunit protein uL1 (217 aa).

Lys-122 carries the N6,N6-dimethyllysine; alternate modification. Position 122 is an N6-methyllysine; alternate (Lys-122).

The protein belongs to the universal ribosomal protein uL1 family.

This is Large ribosomal subunit protein uL1 (rpl10a) from Dictyostelium discoideum (Social amoeba).